A 940-amino-acid polypeptide reads, in one-letter code: Isoleucine--tRNA ligase (940 aa).

A 'HIGH' region motif is present at residues 58–68; sequence PYANGSIHIGH. L-isoleucyl-5'-AMP is bound at residue glutamate 564. Residues 605–609 carry the 'KMSKS' region motif; that stretch reads KMSKS. Lysine 608 lines the ATP pocket. Residues cysteine 903, cysteine 906, cysteine 923, and cysteine 926 each coordinate Zn(2+).

It belongs to the class-I aminoacyl-tRNA synthetase family. IleS type 1 subfamily. As to quaternary structure, monomer. Zn(2+) serves as cofactor.

It localises to the cytoplasm. The enzyme catalyses tRNA(Ile) + L-isoleucine + ATP = L-isoleucyl-tRNA(Ile) + AMP + diphosphate. In terms of biological role, catalyzes the attachment of isoleucine to tRNA(Ile). As IleRS can inadvertently accommodate and process structurally similar amino acids such as valine, to avoid such errors it has two additional distinct tRNA(Ile)-dependent editing activities. One activity is designated as 'pretransfer' editing and involves the hydrolysis of activated Val-AMP. The other activity is designated 'posttransfer' editing and involves deacylation of mischarged Val-tRNA(Ile). The protein is Isoleucine--tRNA ligase of Shewanella baltica (strain OS185).